A 76-amino-acid chain; its full sequence is MKLTCVLIVAVLILAACQFTAANMARYGKTQIARSDVKSIDARRPKCCCVCGVVGRKCCSTWKDCHPVHLPCPSSG.

A signal peptide spans 1 to 43; sequence MKLTCVLIVAVLILAACQFTAANMARYGKTQIARSDVKSIDAR.

Belongs to the conotoxin O1 superfamily. In terms of processing, may contain 4 disulfide bonds. As to expression, expressed by the venom duct.

It localises to the secreted. In terms of biological role, is able to inhibit the growth of Mycobacterium tuberculosis (MIC=0.22-3.52 uM against strain H37Rv and 2 multidrug-resistant strains). May also show neurotoxic activity. The chain is Conotoxin Cal29b from Californiconus californicus (California cone).